Here is a 542-residue protein sequence, read N- to C-terminus: MQTKYIFITGGVCSSLGKGLTSAAIGLLLEKKGLRVSMLKLDPYLNVDPGTMSPFQHGEVYVTDDGAETDLDLGHYYRYTNSFLSKASNATSGQIYNTVIKRERHGDYLGKTVQVIPHITNEIKQRIVNCGKQQENIDVVLVEIGGTAGDIESLPFLEAIRQFTYDHRNNCLNIHLTYVPYLKAAGEVKTKPSQHSVQVLRGIGIFPDIIVCRCEVNLSDEVKDKISLFCNVNRRAVIEEKDVEHSIYEVPLDLHKQGIDALICELLHLPNPSINLSEWEKILETIKNPKGTVTVGIVGKYVQHQDAYKSVFESLTHGALAAGYKLQIKRFEADKLPLDDNQLAKTIEGCDGYLVPGGFGERGWLGKIHTAKLCREKKIPYFGICLGMQVMAVEFARHVVGLNEANSTEFDPDTIHPVISLLSEQRGLQDLGGTMRLGAYICDLKLHTKAYQAYKSSQISERHRHRYEFNNTYKEQMEKAGFVVAGTLKGENLCEIAEVKDHPWMIGVQFHPEFKSKPTDPHPLFRDFIQAMIIYHKSQHGK.

An amidoligase domain region spans residues 1–269; that stretch reads MQTKYIFITG…DALICELLHL (269 aa). S14 is a CTP binding site. Residue S14 coordinates UTP. Residues 15–20 and D72 contribute to the ATP site; that span reads SLGKGL. Positions 72 and 143 each coordinate Mg(2+). Residues 150–152, 189–194, and K225 each bind CTP; these read DIE and KTKPSQ. Residues 189–194 and K225 each bind UTP; that span reads KTKPSQ. An ATP-binding site is contributed by 241–243; that stretch reads KDV. The Glutamine amidotransferase type-1 domain occupies 301-538; sequence YVQHQDAYKS…IQAMIIYHKS (238 aa). Position 358 (G358) interacts with L-glutamine. The Nucleophile; for glutamine hydrolysis role is filled by C385. L-glutamine-binding positions include 386–389, E409, and R466; that span reads LGMQ. Active-site residues include H511 and E513.

This sequence belongs to the CTP synthase family. Homotetramer.

The enzyme catalyses UTP + L-glutamine + ATP + H2O = CTP + L-glutamate + ADP + phosphate + 2 H(+). It carries out the reaction L-glutamine + H2O = L-glutamate + NH4(+). It catalyses the reaction UTP + NH4(+) + ATP = CTP + ADP + phosphate + 2 H(+). It participates in pyrimidine metabolism; CTP biosynthesis via de novo pathway; CTP from UDP: step 2/2. Its activity is regulated as follows. Allosterically activated by GTP, when glutamine is the substrate; GTP has no effect on the reaction when ammonia is the substrate. The allosteric effector GTP functions by stabilizing the protein conformation that binds the tetrahedral intermediate(s) formed during glutamine hydrolysis. Inhibited by the product CTP, via allosteric rather than competitive inhibition. In terms of biological role, catalyzes the ATP-dependent amination of UTP to CTP with either L-glutamine or ammonia as the source of nitrogen. Regulates intracellular CTP levels through interactions with the four ribonucleotide triphosphates. The sequence is that of CTP synthase from Protochlamydia amoebophila (strain UWE25).